The sequence spans 225 residues: U2 small nuclear ribonucleoprotein B'' (225 aa).

An RRM 1 domain is found at 7–86; sequence HTIYINNMND…KPMRIQYAKT (80 aa). Residues 100–144 are disordered; that stretch reads DKEKKKEKKKAKTMEQAAAAANKKPGQGTPNAANTQGTAAPNPQV. At Lys111 the chain carries N6-acetyllysine; alternate. A Glycyl lysine isopeptide (Lys-Gly) (interchain with G-Cter in SUMO2); alternate cross-link involves residue Lys111. The span at 113–123 shows a compositional bias: low complexity; that stretch reads MEQAAAAANKK. Over residues 127 to 140 the composition is skewed to polar residues; it reads GTPNAANTQGTAAP. Tyr151 is subject to Phosphotyrosine. The RRM 2 domain maps to 151 to 225; the sequence is YILFLNNLPE…HAMKITYAKK (75 aa).

The protein belongs to the RRM U1 A/B'' family. In terms of assembly, identified in the spliceosome B complex. Identified in the spliceosome C complex. Present in a spliceosome complex assembled in vitro, and composed of SNRPB2, HPRP8BP and CRNKL1. Contributes to the binding of stem loop IV of U2 snRNA with SNRPP1.

It is found in the nucleus. Its function is as follows. Involved in pre-mRNA splicing as component of the spliceosome. Associated with sn-RNP U2, where it contributes to the binding of stem loop IV of U2 snRNA. This chain is U2 small nuclear ribonucleoprotein B'' (Snrpb2), found in Mus musculus (Mouse).